Reading from the N-terminus, the 569-residue chain is MKFSKFFAPTLKEAPKDAILPSHVFLIRAGFIEQLGSGLYNFLPLGEMVIEKIKAVIKDEMDKTGALQVNFSFVTPSEFWQESGRYNVYGKELLRIKDRKENGFVLSPTNEESSVKMIANKITSYKQLPIHIYQINTKFRDEARPRFGLLRGREFIMKDGYSFHANMEDLKREFDVMEKTYTNIFSRLGLNFRAVEADSGAIGGSGSKEFMVLAQNGEDDILVCESCKYAANIEAAVRVKREAPCAAPETEKMQKFHTPNMKTIDDVANFFKVDKFFTVKAVIKKAVFVDKSEIVLFFVRGDDELQETKALNACGALEFEDASEDEIKKAGLIAGFCGPAGLPDDINFYIDKELKNERNLIVGANEKDYHIVGFAVTNFKDERFVDLSQVRAGDCCPKCGAKLDIKKGIEVGHIFQLGQKYSKAMNAIFLDENGKAVPFFMGCYGIGVSRLLAVMIEAGHDEKGCIWNTQTAPFKLEIIISNSKDEDASNFAIQLYEKCKNAGISTLLDDRKERFGVKMNDFELIGFPFAVLVGKGLKDGNVELIERKGLNKKIVSSGEIFETLKGILC.

Belongs to the class-II aminoacyl-tRNA synthetase family. ProS type 1 subfamily. In terms of assembly, homodimer.

It localises to the cytoplasm. The enzyme catalyses tRNA(Pro) + L-proline + ATP = L-prolyl-tRNA(Pro) + AMP + diphosphate. In terms of biological role, catalyzes the attachment of proline to tRNA(Pro) in a two-step reaction: proline is first activated by ATP to form Pro-AMP and then transferred to the acceptor end of tRNA(Pro). As ProRS can inadvertently accommodate and process non-cognate amino acids such as alanine and cysteine, to avoid such errors it has two additional distinct editing activities against alanine. One activity is designated as 'pretransfer' editing and involves the tRNA(Pro)-independent hydrolysis of activated Ala-AMP. The other activity is designated 'posttransfer' editing and involves deacylation of mischarged Ala-tRNA(Pro). The misacylated Cys-tRNA(Pro) is not edited by ProRS. The sequence is that of Proline--tRNA ligase from Campylobacter hominis (strain ATCC BAA-381 / DSM 21671 / CCUG 45161 / LMG 19568 / NCTC 13146 / CH001A).